The primary structure comprises 213 residues: Pyrrolidone-carboxylate peptidase (213 aa).

Active-site residues include E78, C141, and H165.

The protein belongs to the peptidase C15 family. In terms of assembly, homotetramer.

It is found in the cytoplasm. The enzyme catalyses Release of an N-terminal pyroglutamyl group from a polypeptide, the second amino acid generally not being Pro.. Its function is as follows. Removes 5-oxoproline from various penultimate amino acid residues except L-proline. In Finegoldia magna (strain ATCC 29328 / DSM 20472 / WAL 2508) (Peptostreptococcus magnus), this protein is Pyrrolidone-carboxylate peptidase.